The primary structure comprises 949 residues: Insulin receptor substrate 1 (949 aa).

The region spanning 8–109 is the PH domain; it reads GMALSGYLKK…WLDKLLVLQR (102 aa). The IRS-type PTB domain occupies 122–236; that stretch reads YDQVWQVVIQ…SAMSAKTESN (115 aa). The tract at residues 247 to 270 is disordered; the sequence is PDLSHEPMRKRSSSANEASKPINV. Phosphoserine occurs at positions 286, 287, and 342. The segment covering 304–345 has biased composition (polar residues); that stretch reads RNGTLSESSNQTYFGSNHGLRSNTISGNRPHSTNKHSNSPTF. The segment at 304-373 is disordered; it reads RNGTLSESSN…SDDNGSYSHY (70 aa). The residue at position 410 (tyrosine 410) is a Phosphotyrosine; by INSR. The short motif at 410-413 is the YXXM motif 1 element; the sequence is YIPM. The tract at residues 530–556 is disordered; that stretch reads RSQSSITKEGSGYGTSGNRQKKSTSAP. Serine 554 bears the Phosphoserine mark. Residues 640 to 643 carry the YXXM motif 2 motif; that stretch reads YLEM. Residues 696 to 706 are compositionally biased toward basic and acidic residues; sequence REQTTSEEKKS. Residues 696 to 718 are disordered; that stretch reads REQTTSEEKKSNSPLNEKPFSLK. Tyrosine 892 carries the post-translational modification Phosphotyrosine; by INSR. The interval 906 to 949 is disordered; it reads AKYLKRGSRESPPVSACPEDGNTYAKIDFDQSDSSSSSSNIFNT. A phosphoserine mark is found at serine 913 and serine 916. At tyrosine 929 the chain carries Phosphotyrosine; by INSR. A compositionally biased stretch (low complexity) spans 937–949; sequence SDSSSSSSNIFNT.

As to quaternary structure, bindings to phosphatidylinositol 3-kinase and SHP2.

In terms of biological role, activates phosphatidylinositol 3-kinase when bound to the regulatory p85 subunit. May mediate the control of various cellular processes by insulin-like peptides. When phosphorylated by the insulin receptor binds specifically to various cellular proteins containing SH2 domains. Involved in control of cell proliferation, cell size, and body and organ growth throughout development. Also has a role in a signaling pathway controlling the physiological response required to endure periods of low nutrient conditions. Insulin/insulin-like growth factor (IGF) signaling pathway has a role in regulating aging and is necessary in the ovary for vitellogenic maturation. The protein is Insulin receptor substrate 1 of Drosophila yakuba (Fruit fly).